Here is an 874-residue protein sequence, read N- to C-terminus: Probable inorganic carbon transporter subunit DabA (874 aa).

Zn(2+)-binding residues include Cys398, Asp400, His580, and Cys595.

Belongs to the inorganic carbon transporter (TC 9.A.2) DabA family. As to quaternary structure, forms a complex with DabB. Requires Zn(2+) as cofactor.

It is found in the cell membrane. Part of an energy-coupled inorganic carbon pump. The protein is Probable inorganic carbon transporter subunit DabA of Bacillus anthracis (strain A0248).